The chain runs to 141 residues: Hemoglobin subunit alpha (141 aa).

In terms of domain architecture, Globin spans 1–141 (VLSADDKANV…VSTVLTSKYR (141 aa)). Ser3 carries the post-translational modification Phosphoserine. N6-succinyllysine occurs at positions 7 and 11. Lys16 carries the N6-acetyllysine; alternate modification. The residue at position 16 (Lys16) is an N6-succinyllysine; alternate. A Phosphotyrosine modification is found at Tyr24. Position 35 is a phosphoserine (Ser35). At Lys40 the chain carries N6-succinyllysine. Ser49 is modified (phosphoserine). An O2-binding site is contributed by His58. His87 contributes to the heme b binding site. Ser102 is subject to Phosphoserine. Thr108 carries the post-translational modification Phosphothreonine. A phosphoserine mark is found at Ser124 and Ser131. Phosphothreonine is present on residues Thr134 and Thr137. Ser138 is modified (phosphoserine).

Belongs to the globin family. As to quaternary structure, heterotetramer of two alpha chains and two beta chains. As to expression, red blood cells.

Its function is as follows. Involved in oxygen transport from the lung to the various peripheral tissues. The polypeptide is Hemoglobin subunit alpha (Peromyscus californicus (California mouse)).